Here is a 166-residue protein sequence, read N- to C-terminus: Small ribosomal subunit protein uS5 (166 aa).

The region spanning 11-74 (LQEKLIAVNR…EQAKRNLSKV (64 aa)) is the S5 DRBM domain.

It belongs to the universal ribosomal protein uS5 family. Part of the 30S ribosomal subunit. Contacts proteins S4 and S8.

Its function is as follows. With S4 and S12 plays an important role in translational accuracy. Functionally, located at the back of the 30S subunit body where it stabilizes the conformation of the head with respect to the body. The chain is Small ribosomal subunit protein uS5 from Aeromonas salmonicida (strain A449).